A 475-amino-acid polypeptide reads, in one-letter code: Rho GTPase-activating protein 15 (475 aa).

A compositionally biased stretch (polar residues) spans 1-22 (MQKSTNSDTSVETLNSTRQGTG). The disordered stretch occupies residues 1–23 (MQKSTNSDTSVETLNSTRQGTGA). Residues Ser-43, Ser-103, Ser-196, Ser-199, and Ser-243 each carry the phosphoserine modification. Residues 79–189 (MVEKEGYLQK…WFHAIKNAID (111 aa)) enclose the PH domain. One can recognise a Rho-GAP domain in the interval 281-470 (SHLHKVCERE…LMLSEYSKIF (190 aa)).

As to expression, expressed in lung, liver and lymphoid cells.

Its subcellular location is the cytoplasm. The protein localises to the membrane. Functionally, GTPase activator for the Rho-type GTPases by converting them to an inactive GDP-bound state. Has activity toward RAC1. Overexpression results in an increase in actin stress fibers and cell contraction. This is Rho GTPase-activating protein 15 (ARHGAP15) from Homo sapiens (Human).